We begin with the raw amino-acid sequence, 403 residues long: Protein-glutamate methylesterase/protein-glutamine glutaminase (403 aa).

The Response regulatory domain maps to A8 to K126. D59 is subject to 4-aspartylphosphate. One can recognise a CheB-type methylesterase domain in the interval P204–I393. Catalysis depends on residues S219, H246, and D342.

The protein belongs to the CheB family. Post-translationally, phosphorylated by CheA. Phosphorylation of the N-terminal regulatory domain activates the methylesterase activity.

The protein resides in the cytoplasm. It catalyses the reaction [protein]-L-glutamate 5-O-methyl ester + H2O = L-glutamyl-[protein] + methanol + H(+). It carries out the reaction L-glutaminyl-[protein] + H2O = L-glutamyl-[protein] + NH4(+). Its function is as follows. Involved in chemotaxis. Part of a chemotaxis signal transduction system that modulates chemotaxis in response to various stimuli. Catalyzes the demethylation of specific methylglutamate residues introduced into the chemoreceptors (methyl-accepting chemotaxis proteins or MCP) by CheR. Also mediates the irreversible deamidation of specific glutamine residues to glutamic acid. This Treponema pallidum (strain Nichols) protein is Protein-glutamate methylesterase/protein-glutamine glutaminase.